Here is a 295-residue protein sequence, read N- to C-terminus: Bifunctional protein FolD (295 aa).

Residues 166–168, serine 191, and isoleucine 232 each bind NADP(+); that span reads GRS.

The protein belongs to the tetrahydrofolate dehydrogenase/cyclohydrolase family. As to quaternary structure, homodimer.

It catalyses the reaction (6R)-5,10-methylene-5,6,7,8-tetrahydrofolate + NADP(+) = (6R)-5,10-methenyltetrahydrofolate + NADPH. It carries out the reaction (6R)-5,10-methenyltetrahydrofolate + H2O = (6R)-10-formyltetrahydrofolate + H(+). The protein operates within one-carbon metabolism; tetrahydrofolate interconversion. Its function is as follows. Catalyzes the oxidation of 5,10-methylenetetrahydrofolate to 5,10-methenyltetrahydrofolate and then the hydrolysis of 5,10-methenyltetrahydrofolate to 10-formyltetrahydrofolate. The polypeptide is Bifunctional protein FolD (Rhodopseudomonas palustris (strain BisB5)).